A 463-amino-acid polypeptide reads, in one-letter code: MVNRRIAEILRSGQPDESLVVQGWVRTKRELKGFAFIEVNDGSSLGNLQVVINQDLPDYAVIVKQLNTGASVEVNGVLVASQGKGQRIELKAEAVKVYGEADPETYPLQKKRHSFEFLRTIGHLRSRTNSFGAVFRVRNACSAAIHQFFQERGFLWVHTPIITASDCEGAGELFSVTSLDLKQIPRTENQGIDYSQDFFAKPTYLTVSGQLEAEVMAMAFSNVYTFGPTFRAENSNTSRHLAEFWMVEPEMAFCDLEGDMDLAEAFLKHIFNHVLEKCPEDMEFFNQRIDNTVLATAENIINNQFERLTYTDAIKLLEKADVKFEYPVSWGLDLQSEHERYLAEQLFKKPVIVTDYPAQIKAFYMRLSDDEKTVRAMDVLAPKIGEIIGGSQREERLDVLERRVLAQGMQPEDLWWYLDLRRYGTVPHAGFGLGFERLVQFITGMGNIRDVIPFPRTPQNAEF.

Belongs to the class-II aminoacyl-tRNA synthetase family. Homodimer.

It is found in the cytoplasm. It carries out the reaction tRNA(Asn) + L-asparagine + ATP = L-asparaginyl-tRNA(Asn) + AMP + diphosphate + H(+). This is Asparagine--tRNA ligase from Nostoc sp. (strain PCC 7120 / SAG 25.82 / UTEX 2576).